Here is a 155-residue protein sequence, read N- to C-terminus: MPVVLDTPVAVRRTAMDLLARREHGRVELTRKLRQRGAPPELIDAALDRLVEEGLLSESRYLESFVSYRARSGYGPVRIREELNQRGLQRADIEQALRECGIDWQEKLHELWQRKFAGALPVDARERARQGRFLSYRGYPLDMIGRLLSGRGGDD.

Belongs to the RecX family.

The protein resides in the cytoplasm. Functionally, modulates RecA activity. The sequence is that of Regulatory protein RecX from Pseudomonas savastanoi pv. phaseolicola (strain 1448A / Race 6) (Pseudomonas syringae pv. phaseolicola (strain 1448A / Race 6)).